The following is a 132-amino-acid chain: Small ribosomal subunit protein uS9 (132 aa).

Belongs to the universal ribosomal protein uS9 family.

In Halobacterium salinarum (strain ATCC 700922 / JCM 11081 / NRC-1) (Halobacterium halobium), this protein is Small ribosomal subunit protein uS9 (rps9).